We begin with the raw amino-acid sequence, 249 residues long: 3-deoxy-manno-octulosonate cytidylyltransferase (249 aa).

Belongs to the KdsB family.

It localises to the cytoplasm. It catalyses the reaction 3-deoxy-alpha-D-manno-oct-2-ulosonate + CTP = CMP-3-deoxy-beta-D-manno-octulosonate + diphosphate. It functions in the pathway nucleotide-sugar biosynthesis; CMP-3-deoxy-D-manno-octulosonate biosynthesis; CMP-3-deoxy-D-manno-octulosonate from 3-deoxy-D-manno-octulosonate and CTP: step 1/1. It participates in bacterial outer membrane biogenesis; lipopolysaccharide biosynthesis. Functionally, activates KDO (a required 8-carbon sugar) for incorporation into bacterial lipopolysaccharide in Gram-negative bacteria. The sequence is that of 3-deoxy-manno-octulosonate cytidylyltransferase from Photorhabdus laumondii subsp. laumondii (strain DSM 15139 / CIP 105565 / TT01) (Photorhabdus luminescens subsp. laumondii).